We begin with the raw amino-acid sequence, 223 residues long: MHCAEAGKALIKFNHCEKYIYSFSVPQCCPLCQQDLGSRKLEDAPVSIANPFTNGHQEKCSFLLRPTQGTFLREYDGRSDLHVGITNTNGVVYNYSAHGVQRDGEGWEESISIPLLQPNMYGMMEQWDKYLEDFSTSGAWLPHRYEDNHHNCYSYALTFINCVLMAEGRQQLDKGEFTEKYVVPRTRLASKFITLYRAIREHGFYVTDCPQQQAQPPEGGGLC.

The chain is MKRN2 opposite strand protein (MKRN2OS) from Homo sapiens (Human).